Here is a 775-residue protein sequence, read N- to C-terminus: Serine/threonine-protein kinase ppk6 (775 aa).

Ser132 and Ser134 each carry phosphoserine. The Protein kinase domain maps to 503–758; it reads YTTIKELGIG…IEETLQHHWF (256 aa). Residues 509-517 and Lys533 each bind ATP; that span reads LGIGAYGQV. Asp636 serves as the catalytic Proton acceptor.

This sequence belongs to the protein kinase superfamily. Ser/Thr protein kinase family.

The protein resides in the cytoplasm. It is found in the nucleus. It carries out the reaction L-seryl-[protein] + ATP = O-phospho-L-seryl-[protein] + ADP + H(+). It catalyses the reaction L-threonyl-[protein] + ATP = O-phospho-L-threonyl-[protein] + ADP + H(+). This Schizosaccharomyces pombe (strain 972 / ATCC 24843) (Fission yeast) protein is Serine/threonine-protein kinase ppk6 (ppk6).